Reading from the N-terminus, the 538-residue chain is Cytochrome P450 monooxygenase claO (538 aa).

Helical transmembrane passes span 7 to 27 and 222 to 242; these read IGAF…KLVG and INPS…PILL. Cysteine 475 lines the heme pocket.

The protein belongs to the cytochrome P450 family. The cofactor is heme.

It is found in the membrane. Its pathway is secondary metabolite biosynthesis; terpenoid biosynthesis. Its function is as follows. Cytochrome P450 monooxygenase; part of the gene cluster that mediates the biosynthesis of clavilactone A, a meroterpenoid that features a unique benzo-fused ten-membered carbocyclic ring unit with an alpha,beta-epoxy-gamma-lactone moiety, forming an intriguing 10/5/3 tricyclic nested skeleton. Cytochrome P450 monooxygenases claO, claP, claQ, claU, and claW are close orthologs, suggesting that a redundant function or pseudogenes are present in the cla cluster. These monoxygenases are not involved in clavilactone A biosynthesis nor in its modification. ClaR, ClaS and ClaT are sufficient to produce clavilactone A. The biosynthesis begins with the prenyltransferase claS that transfers geranyl pyrophosphate (GPP) to hydroquinone to produces geranylhydroquinone. The cytochrome P450 monooxygenase claR then catalyzes the diradical coupling reaction between the intramolecular hydroquinone and allyl moieties to form the benzo-fused ten-membered carbocyclic ring unit of wigantol. Finally the cytochrome P450 monooxygenase claT exquisitely and stereoselectively assembles the alpha,beta-epoxy-gamma-lactone moiety, producing clavilactone A via arnebinol A. The chain is Cytochrome P450 monooxygenase claO from Ampulloclitocybe clavipes (Club foot).